The primary structure comprises 60 residues: MFARLIRYFQEARAELARVTWPTREQVVEGTQAILLFTLAFMVILGLYDTVFRFLIGLLR.

Over 1 to 31 (MFARLIRYFQEARAELARVTWPTREQVVEGT) the chain is Cytoplasmic. A helical membrane pass occupies residues 32–52 (QAILLFTLAFMVILGLYDTVF). Over 53-60 (RFLIGLLR) the chain is Extracellular.

The protein belongs to the SecE/SEC61-gamma family. As to quaternary structure, component of the Sec protein translocase complex. Heterotrimer consisting of SecY, SecE and SecG subunits. The heterotrimers can form oligomers, although 1 heterotrimer is thought to be able to translocate proteins. Interacts with SecDF, and other proteins may be involved. The channel interacts with SecA via subunit SecY.

It localises to the cell inner membrane. Its function is as follows. Essential subunit of the protein translocation channel SecYEG. Clamps together the 2 halves of SecY. May contact the channel plug during translocation. The protein is Protein translocase subunit SecE of Thermus thermophilus (strain ATCC 27634 / DSM 579 / HB8).